The primary structure comprises 466 residues: Asparagine--tRNA ligase (466 aa).

This sequence belongs to the class-II aminoacyl-tRNA synthetase family. As to quaternary structure, homodimer.

It localises to the cytoplasm. The enzyme catalyses tRNA(Asn) + L-asparagine + ATP = L-asparaginyl-tRNA(Asn) + AMP + diphosphate + H(+). The sequence is that of Asparagine--tRNA ligase from Shewanella sp. (strain MR-4).